A 351-amino-acid polypeptide reads, in one-letter code: 3-dehydroquinate synthase (351 aa).

NAD(+) contacts are provided by residues 60 to 65, 94 to 98, 118 to 119, lysine 131, lysine 140, and 158 to 161; these read DGEEYK, GVISD, TT, and FLKT. Positions 173, 239, and 256 each coordinate Zn(2+).

The protein belongs to the sugar phosphate cyclases superfamily. Dehydroquinate synthase family. NAD(+) is required as a cofactor. Requires Co(2+) as cofactor. It depends on Zn(2+) as a cofactor.

It is found in the cytoplasm. The catalysed reaction is 7-phospho-2-dehydro-3-deoxy-D-arabino-heptonate = 3-dehydroquinate + phosphate. It participates in metabolic intermediate biosynthesis; chorismate biosynthesis; chorismate from D-erythrose 4-phosphate and phosphoenolpyruvate: step 2/7. Catalyzes the conversion of 3-deoxy-D-arabino-heptulosonate 7-phosphate (DAHP) to dehydroquinate (DHQ). The protein is 3-dehydroquinate synthase of Campylobacter jejuni subsp. jejuni serotype O:2 (strain ATCC 700819 / NCTC 11168).